A 239-amino-acid polypeptide reads, in one-letter code: tRNA (guanine-N(1)-)-methyltransferase (239 aa).

Residues G109 and 133–138 (IGDYVL) each bind S-adenosyl-L-methionine. Disordered regions lie at residues 163 to 187 (PASR…YTRP) and 217 to 239 (QRTR…DPGR). Basic and acidic residues-rich tracts occupy residues 165-180 (SRHD…RRLE) and 217-226 (QRTRERRPEL).

It belongs to the RNA methyltransferase TrmD family. Homodimer.

Its subcellular location is the cytoplasm. The enzyme catalyses guanosine(37) in tRNA + S-adenosyl-L-methionine = N(1)-methylguanosine(37) in tRNA + S-adenosyl-L-homocysteine + H(+). Specifically methylates guanosine-37 in various tRNAs. This chain is tRNA (guanine-N(1)-)-methyltransferase, found in Mycolicibacterium paratuberculosis (strain ATCC BAA-968 / K-10) (Mycobacterium paratuberculosis).